A 125-amino-acid chain; its full sequence is Small ribosomal subunit protein uS12c (125 aa).

Belongs to the universal ribosomal protein uS12 family. Part of the 30S ribosomal subunit.

The protein localises to the plastid. The protein resides in the chloroplast. In terms of biological role, with S4 and S5 plays an important role in translational accuracy. Located at the interface of the 30S and 50S subunits. This Tupiella akineta (Green alga) protein is Small ribosomal subunit protein uS12c (rps12).